Reading from the N-terminus, the 352-residue chain is Protein RecA (352 aa).

Position 65–72 (65–72) interacts with ATP; the sequence is GPESSGKT.

This sequence belongs to the RecA family.

Its subcellular location is the cytoplasm. Functionally, can catalyze the hydrolysis of ATP in the presence of single-stranded DNA, the ATP-dependent uptake of single-stranded DNA by duplex DNA, and the ATP-dependent hybridization of homologous single-stranded DNAs. It interacts with LexA causing its activation and leading to its autocatalytic cleavage. In Pseudomonas fluorescens (strain Pf0-1), this protein is Protein RecA.